The chain runs to 415 residues: Multidrug resistance protein MdtA (415 aa).

Residues 1 to 21 (MKGSYKSRWVIVIVVVIAAIA) form the signal peptide. Residues 31 to 46 (DSQSAAPGATKQAQQS) are compositionally biased toward polar residues. 2 disordered regions span residues 31–56 (DSQSAAPGATKQAQQSPAGGRRGMRA) and 391–415 (VEAQSTTTPEEKATSREYAKKGARS). The span at 399-415 (PEEKATSREYAKKGARS) shows a compositional bias: basic and acidic residues.

It belongs to the membrane fusion protein (MFP) (TC 8.A.1) family. In terms of assembly, part of a tripartite efflux system composed of MdtA, MdtB and MdtC.

It localises to the cell inner membrane. In terms of biological role, the MdtABC tripartite complex confers resistance against novobiocin and deoxycholate. The chain is Multidrug resistance protein MdtA from Escherichia coli O45:K1 (strain S88 / ExPEC).